The following is a 331-amino-acid chain: Centriolar satellite-associated tubulin polyglutamylase complex regulator 1 (331 aa).

Positions 1 to 111 (MLSPERLALP…HCLLQLLCPD (111 aa)) are required for interaction with PCM1. Residues 1 to 225 (MLSPERLALP…SCPPPALVKE (225 aa)) are required for interaction with TPGS1, LRRC49, and TTLL1. The required for interaction with TPGS2 stretch occupies residues 112 to 331 (FPLELTQKAA…STEETDESET (220 aa)). The tract at residues 292–331 (SCLPSRTPPRVGSPWKPLHRSRKLDAESDGSTEETDESET) is disordered. Positions 318 to 331 (ESDGSTEETDESET) are enriched in acidic residues. Residue serine 319 is modified to Phosphoserine.

It belongs to the CSTPP1 family. Interacts with PCM1. Interacts with TTLL1, TPGS1, TPGS2 and LRRC49; the interactions link CSTPP1 to the complex TPGC. Binds to alpha-tubulin.

The protein localises to the cytoplasm. It localises to the cytoskeleton. Its subcellular location is the microtubule organizing center. It is found in the centrosome. The protein resides in the centriolar satellite. Functionally, regulator of the tubulin polyglutamylase complex (TPGC) that controls cytoskeletal organization, nuclear shape, and cilium disassembly by balancing microtubule and actin assembly. Regulates the assembly and stability of the TPGC and thereby modulates polyglutamylation of the microtubule, which antagonizes MAP4 binding. This is Centriolar satellite-associated tubulin polyglutamylase complex regulator 1 (Cstpp1) from Rattus norvegicus (Rat).